A 980-amino-acid chain; its full sequence is Glutamate receptor ionotropic, kainate 5 (980 aa).

The first 14 residues, M1–A14, serve as a signal peptide directing secretion. Residues S15–P544 are Extracellular-facing. Cystine bridges form between C36–C292, C83–C334, and C165–C170. N-linked (GlcNAc...) asparagine glycosylation is found at N219, N271, N285, N322, N372, N394, N400, N407, N414, and N478. The chain crosses the membrane as a helical span at residues A545–A565. The Cytoplasmic segment spans residues R566 to G622. The chain crosses the membrane as a helical span at residues V623 to L643. Residues T644–N803 are Extracellular-facing. N-linked (GlcNAc...) asparagine glycosylation is present at N735. A helical membrane pass occupies residues I804–M824. The Cytoplasmic portion of the chain corresponds to E825–E980. Disordered regions lie at residues Y891–C927 and A944–E980. The segment covering G894–H903 has biased composition (gly residues).

Belongs to the glutamate-gated ion channel (TC 1.A.10.1) family. GRIK5 subfamily. In terms of assembly, homotetramer. Heterotetramer with GRIK2. Can form functional heteromeric receptors with GRIK1 and GRIK2. Can form functional heteromeric receptors with GRIK3.

Its subcellular location is the cell membrane. It is found in the postsynaptic cell membrane. The protein localises to the presynaptic cell membrane. Ionotropic glutamate receptor that functions as a cation-permeable ligand-gated ion channel, gated by L-glutamate and the glutamatergic agonist kainic acid. Cannot form functional channels on its own and produces channel activity only in heteromeric assembly with GRIK1 and GRIK2 subunits. Can form functional heteromeric receptors with GRIK3. This chain is Glutamate receptor ionotropic, kainate 5 (GRIK5), found in Homo sapiens (Human).